The sequence spans 909 residues: Zinc finger and BTB domain-containing protein 41 (909 aa).

The BTB domain occupies 88–152; the sequence is CDLLIIVEGK…LYTSEFFVYK (65 aa). The C2H2-type 1 zinc-finger motif lies at 207–230; the sequence is HQCKFCSRHFCYKKSLENHLAKTH. Residues 252 to 344 form a disordered region; the sequence is RSKRNRKCPV…PEAGDSVGNV (93 aa). Residues 266–275 are compositionally biased toward acidic residues; that stretch reads TSDDEQESGD. Positions 284–295 are enriched in basic and acidic residues; sequence NFDKEKSDRNDS. Residues 296–322 are compositionally biased toward acidic residues; sequence EDPGSEYNAEEDELEEEMSDEYSDIEE. 13 C2H2-type zinc fingers span residues 361-383, 389-411, 422-445, 463-485, 491-514, 518-541, 547-569, 575-597, 603-625, 631-654, 668-690, 696-718, and 724-747; these read LQCPKCDKTFDRIGKYESHTRVH, FECDICHQRYSTKSNLTVHRKKH, HKCPYCNKLHASKKTLAKHVKRFH, WKCDICKKSFTRRPHLEEHMILH, FKCTYCEEHFKSRFARLKHQEKFH, FPCDICGRQFNDTGNLKRHIECTH, WTCFICGKSVRERTTLKEHLRIH, HLCSICGQSFRHGSSYRLHLRVH, YECDECGKTFIRHDHLTKHKKIH, HQCEECGKCFGRRDHLTVHYKSVH, HQCDVCKKIFKGKSSLEMHFRTH, YKCQICNQSFRIKKTLTKHLVIH, and FNCQHCNATFKRKDKLKYHIDHVH.

It is found in the nucleus. Functionally, may be involved in transcriptional regulation. In Homo sapiens (Human), this protein is Zinc finger and BTB domain-containing protein 41 (ZBTB41).